Consider the following 97-residue polypeptide: uncharacterized protein (97 aa).

3 consecutive transmembrane segments (helical) span residues cysteine 7–glycine 27, isoleucine 34–serine 54, and isoleucine 69–leucine 89.

It is found in the cell membrane. This is an uncharacterized protein from Haemophilus influenzae (strain ATCC 51907 / DSM 11121 / KW20 / Rd).